We begin with the raw amino-acid sequence, 184 residues long: TATA-box-binding protein (184 aa).

Repeat copies occupy residues 9–85 and 100–178.

Belongs to the TBP family.

General factor that plays a role in the activation of archaeal genes transcribed by RNA polymerase. Binds specifically to the TATA box promoter element which lies close to the position of transcription initiation. In Thermoplasma volcanium (strain ATCC 51530 / DSM 4299 / JCM 9571 / NBRC 15438 / GSS1), this protein is TATA-box-binding protein.